The primary structure comprises 305 residues: Sulfate adenylyltransferase subunit 2 (305 aa).

Residues 283–305 are disordered; that stretch reads RQGRVIDHDQSASMEKKKQEGYF.

Belongs to the PAPS reductase family. CysD subfamily. Heterodimer composed of CysD, the smaller subunit, and CysN.

It catalyses the reaction sulfate + ATP + H(+) = adenosine 5'-phosphosulfate + diphosphate. It functions in the pathway sulfur metabolism; hydrogen sulfide biosynthesis; sulfite from sulfate: step 1/3. With CysN forms the ATP sulfurylase (ATPS) that catalyzes the adenylation of sulfate producing adenosine 5'-phosphosulfate (APS) and diphosphate, the first enzymatic step in sulfur assimilation pathway. APS synthesis involves the formation of a high-energy phosphoric-sulfuric acid anhydride bond driven by GTP hydrolysis by CysN coupled to ATP hydrolysis by CysD. The protein is Sulfate adenylyltransferase subunit 2 of Caulobacter sp. (strain K31).